The chain runs to 557 residues: Dihydroxy-acid dehydratase (557 aa).

Position 47 (Cys-47) interacts with [2Fe-2S] cluster. Asp-79 lines the Mg(2+) pocket. Position 120 (Cys-120) interacts with [2Fe-2S] cluster. The Mg(2+) site is built by Asp-121 and Lys-122. N6-carboxylysine is present on Lys-122. Cys-192 provides a ligand contact to [2Fe-2S] cluster. Glu-444 lines the Mg(2+) pocket. Ser-470 functions as the Proton acceptor in the catalytic mechanism.

It belongs to the IlvD/Edd family. As to quaternary structure, homodimer. Requires [2Fe-2S] cluster as cofactor. It depends on Mg(2+) as a cofactor.

It carries out the reaction (2R)-2,3-dihydroxy-3-methylbutanoate = 3-methyl-2-oxobutanoate + H2O. The catalysed reaction is (2R,3R)-2,3-dihydroxy-3-methylpentanoate = (S)-3-methyl-2-oxopentanoate + H2O. Its pathway is amino-acid biosynthesis; L-isoleucine biosynthesis; L-isoleucine from 2-oxobutanoate: step 3/4. It participates in amino-acid biosynthesis; L-valine biosynthesis; L-valine from pyruvate: step 3/4. Its function is as follows. Functions in the biosynthesis of branched-chain amino acids. Catalyzes the dehydration of (2R,3R)-2,3-dihydroxy-3-methylpentanoate (2,3-dihydroxy-3-methylvalerate) into 2-oxo-3-methylpentanoate (2-oxo-3-methylvalerate) and of (2R)-2,3-dihydroxy-3-methylbutanoate (2,3-dihydroxyisovalerate) into 2-oxo-3-methylbutanoate (2-oxoisovalerate), the penultimate precursor to L-isoleucine and L-valine, respectively. The sequence is that of Dihydroxy-acid dehydratase from Synechococcus sp. (strain CC9902).